Reading from the N-terminus, the 282-residue chain is Tyrosine recombinase XerA (282 aa).

Positions 2 to 79 (SEPNEVIEEF…ALRAYFRFEG (78 aa)) constitute a Core-binding (CB) domain. The 177-residue stretch at 95–271 (SLPKALTREE…TVEHLRKAQE (177 aa)) folds into the Tyr recombinase domain. Catalysis depends on residues Arg132, Lys157, His223, Arg226, and His249. Tyr258 functions as the O-(3'-phospho-DNA)-tyrosine intermediate in the catalytic mechanism.

The protein belongs to the 'phage' integrase family. XerA subfamily.

It localises to the cytoplasm. Site-specific tyrosine recombinase, which acts by catalyzing the cutting and rejoining of the recombining DNA molecules. This is Tyrosine recombinase XerA from Thermococcus kodakarensis (strain ATCC BAA-918 / JCM 12380 / KOD1) (Pyrococcus kodakaraensis (strain KOD1)).